The primary structure comprises 189 residues: Ribosome maturation factor RimM (189 aa).

Residues 95 to 177 (EDDEFYYADL…AGLVDDPEEL (83 aa)) form the PRC barrel domain.

It belongs to the RimM family. In terms of assembly, binds ribosomal protein uS19.

The protein localises to the cytoplasm. An accessory protein needed during the final step in the assembly of 30S ribosomal subunit, possibly for assembly of the head region. Essential for efficient processing of 16S rRNA. May be needed both before and after RbfA during the maturation of 16S rRNA. It has affinity for free ribosomal 30S subunits but not for 70S ribosomes. The protein is Ribosome maturation factor RimM of Rhizobium leguminosarum bv. trifolii (strain WSM2304).